Consider the following 421-residue polypeptide: Serine--tRNA ligase (421 aa).

230–232 (TAE) is a binding site for L-serine. 259 to 261 (RRE) serves as a coordination point for ATP. E282 lines the L-serine pocket. 346-349 (EISS) contributes to the ATP binding site. S381 lines the L-serine pocket.

This sequence belongs to the class-II aminoacyl-tRNA synthetase family. Type-1 seryl-tRNA synthetase subfamily. Homodimer. The tRNA molecule binds across the dimer.

It is found in the cytoplasm. It catalyses the reaction tRNA(Ser) + L-serine + ATP = L-seryl-tRNA(Ser) + AMP + diphosphate + H(+). The catalysed reaction is tRNA(Sec) + L-serine + ATP = L-seryl-tRNA(Sec) + AMP + diphosphate + H(+). It participates in aminoacyl-tRNA biosynthesis; selenocysteinyl-tRNA(Sec) biosynthesis; L-seryl-tRNA(Sec) from L-serine and tRNA(Sec): step 1/1. In terms of biological role, catalyzes the attachment of serine to tRNA(Ser). Is also able to aminoacylate tRNA(Sec) with serine, to form the misacylated tRNA L-seryl-tRNA(Sec), which will be further converted into selenocysteinyl-tRNA(Sec). This Acidithiobacillus ferrooxidans (strain ATCC 23270 / DSM 14882 / CIP 104768 / NCIMB 8455) (Ferrobacillus ferrooxidans (strain ATCC 23270)) protein is Serine--tRNA ligase.